Reading from the N-terminus, the 207-residue chain is Gap junction epsilon-1 protein (207 aa).

Residues 1-22 (MSLNYIKNFYEGCLRPPTVIGQ) are Cytoplasmic-facing. Residues 23–43 (FHTLFFGSVRTFFLGVLGFAV) traverse the membrane as a helical segment. Residues 44–74 (YGNEALHFSCDPDKRELNLYCYNQFRPITPQ) lie on the Extracellular side of the membrane. 2 disulfides stabilise this stretch: Cys53–Cys161 and Cys64–Cys147. The chain crosses the membrane as a helical span at residues 75–95 (VFWALQLVTVLVPGAVFHLYA). At 96-111 (ACKNIDQEEILHRPMS) the chain is on the cytoplasmic side. A helical transmembrane segment spans residues 112-132 (TVFYIISVLLRIILEVLAFWL). The Extracellular segment spans residues 133 to 175 (QSHLFGFLVDPIFMCDVTGLGKILNVSKCMVPEHFEKTIFLSA). The chain crosses the membrane as a helical span at residues 176–196 (MYTFTIITILLCIAEIFEILF). Over 197–207 (RRLGYLNQPMT) the chain is Cytoplasmic.

It belongs to the connexin family. Beta-type (group I) subfamily. In terms of assembly, a connexon is composed of a hexamer of connexins.

Its subcellular location is the cell membrane. Has significant hemichannel activity. However, has only low-efficiency gap junction activity and probably does not function as a gap junction channel in vivo. This Danio rerio (Zebrafish) protein is Gap junction epsilon-1 protein.